Consider the following 130-residue polypeptide: Small ribosomal subunit protein uS9 (130 aa).

Belongs to the universal ribosomal protein uS9 family.

The chain is Small ribosomal subunit protein uS9 (rpsI) from Haemophilus influenzae (strain ATCC 51907 / DSM 11121 / KW20 / Rd).